We begin with the raw amino-acid sequence, 294 residues long: Retinoic acid receptor responder protein 1 (294 aa).

Residues 1 to 20 (MQPRRQRLPAPWSGPRGPRP) are Lumenal-facing. Residues 21–42 (TAPLLALLLLLAPVAAPAGSGD) form a helical; Signal-anchor for type III membrane protein membrane-spanning segment. 2 Cystatin LXN-type domains span residues 38–153 (AGSG…EKKK) and 173–276 (EIVS…TPEE). The O-linked (Xyl...) (chondroitin sulfate) serine glycan is linked to Ser40. At 43 to 294 (PDDPGQPQDA…AVVPTELSNF (252 aa)) the chain is on the cytoplasmic side. The tract at residues 273 to 294 (TPEEASGTEEGSAVVPTELSNF) is disordered.

This sequence belongs to the protease inhibitor I47 (latexin) family. In terms of assembly, interacts with AGBL2, KIF11 and MAPRE1. Post-translationally, not N-glycosylated. O-glycosylated; contains chondroitin sulfate. As to expression, detected in urine (at protein level).

Its subcellular location is the membrane. The protein localises to the secreted. Inhibitor of the cytoplasmic carboxypeptidase AGBL2, may regulate the alpha-tubulin tyrosination cycle. This is Retinoic acid receptor responder protein 1 (RARRES1) from Homo sapiens (Human).